Here is a 1347-residue protein sequence, read N- to C-terminus: Probable serine/threonine-protein kinase DDB_G0288147 (1347 aa).

The segment at 12-67 (NHRFEPYTLKHLTICKRCEKEIIGVSNSAQICYSCKNIYHTRCCKEIETKKLELIC) adopts a Phorbol-ester/DAG-type zinc-finger fold. 3 disordered regions span residues 262–316 (PFNE…LNES), 333–402 (SNNS…KSSK), and 463–485 (DNNN…NNNN). Positions 271–282 (DSTLSASTYNRR) are enriched in polar residues. 3 stretches are compositionally biased toward low complexity: residues 286–316 (KNKN…LNES), 333–342 (SNNSNNLAAL), and 350–361 (TTTTTTTTTTTT). Composition is skewed to basic residues over residues 366–382 (NNHH…KSRK) and 389–402 (NKKK…KSSK). The span at 464–485 (NNNNNNNNNNNNNNNSNNNNNN) shows a compositional bias: low complexity. The Protein kinase domain maps to 599–854 (VKINVEIYDS…EILKVFYSLL (256 aa)). Residues 605-613 (IYDSPLCTV) and K626 contribute to the ATP site. Catalysis depends on D724, which acts as the Proton acceptor. Disordered regions lie at residues 937-1241 (SERK…IVNP) and 1282-1310 (SSDS…IRSP). The span at 976–986 (IIDDDDDDDDD) shows a compositional bias: acidic residues. Composition is skewed to low complexity over residues 1004–1015 (NINSENKNNNNV) and 1024–1062 (SSNS…NNNN). 2 stretches are compositionally biased toward polar residues: residues 1063–1083 (LRQN…NQLM) and 1118–1127 (LSSSQTSEIG). Low complexity-rich tracts occupy residues 1128 to 1241 (DNNT…IVNP) and 1282 to 1291 (SSDSSNSLSD).

Belongs to the protein kinase superfamily. TKL Ser/Thr protein kinase family.

The enzyme catalyses L-seryl-[protein] + ATP = O-phospho-L-seryl-[protein] + ADP + H(+). It catalyses the reaction L-threonyl-[protein] + ATP = O-phospho-L-threonyl-[protein] + ADP + H(+). The polypeptide is Probable serine/threonine-protein kinase DDB_G0288147 (Dictyostelium discoideum (Social amoeba)).